A 361-amino-acid polypeptide reads, in one-letter code: Biotin synthase (361 aa).

Residues 47–278 (VHGDEVALCG…AAHIFVMGGR (232 aa)) enclose the Radical SAM core domain. [4Fe-4S] cluster-binding residues include cysteine 65, cysteine 69, and cysteine 72. Residues serine 110, cysteine 143, and cysteine 203 each contribute to the [2Fe-2S] cluster site.

The protein belongs to the radical SAM superfamily. Biotin synthase family. Homodimer. The cofactor is [4Fe-4S] cluster. [2Fe-2S] cluster serves as cofactor.

It catalyses the reaction (4R,5S)-dethiobiotin + (sulfur carrier)-SH + 2 reduced [2Fe-2S]-[ferredoxin] + 2 S-adenosyl-L-methionine = (sulfur carrier)-H + biotin + 2 5'-deoxyadenosine + 2 L-methionine + 2 oxidized [2Fe-2S]-[ferredoxin]. It participates in cofactor biosynthesis; biotin biosynthesis; biotin from 7,8-diaminononanoate: step 2/2. Catalyzes the conversion of dethiobiotin (DTB) to biotin by the insertion of a sulfur atom into dethiobiotin via a radical-based mechanism. In Anaeromyxobacter dehalogenans (strain 2CP-C), this protein is Biotin synthase.